The sequence spans 153 residues: Transthyretin (153 aa).

A signal peptide spans 1-24 (MAYYNTLALLTIFIFSGAFHRAQG). Cysteine 33 is modified (sulfocysteine). L-thyroxine contacts are provided by lysine 38, glutamate 77, and serine 140.

This sequence belongs to the transthyretin family. In terms of assembly, homotetramer. Dimer of dimers. In the homotetramer, subunits assemble around a central channel that can accommodate two ligand molecules. Interacts with RBP4. In terms of processing, sulfonation of the reactive cysteine Cys-33 enhances the stability of the native conformation of TTR, avoiding misassembly of the protein leading to amyloid formation. In terms of tissue distribution, detected in plasma (at protein level). Expressed during metamorphosis in tadpole liver but not in tadpole brain, nor adult liver.

The protein resides in the secreted. Its function is as follows. Thyroid hormone-binding protein, with a much higher binding affinity for triiodothyronine (T3) than for thyroxine (T4). Probably transports triiodothyronine from the bloodstream to the brain. This Aquarana catesbeiana (American bullfrog) protein is Transthyretin.